Consider the following 98-residue polypeptide: Small proline-rich protein 2B (98 aa).

5 tandem repeats follow at residues 21-29 (PKCPEPCPP), 30-38 (PKCPEPCPP), 39-47 (PVCCEPCPP), 48-56 (PKCPEPCPP), and 57-65 (PVCCEPCPP). The 5 X 9 AA approximate tandem repeats stretch occupies residues 21–65 (PKCPEPCPPPKCPEPCPPPVCCEPCPPPKCPEPCPPPVCCEPCPP).

This sequence belongs to the cornifin (SPRR) family. In terms of tissue distribution, expressed in uterus.

The protein localises to the cytoplasm. Functionally, cross-linked envelope protein of keratinocytes. It is a keratinocyte protein that first appears in the cell cytosol, but ultimately becomes cross-linked to membrane proteins by transglutaminase. All that results in the formation of an insoluble envelope beneath the plasma membrane. The polypeptide is Small proline-rich protein 2B (Sprr2b) (Mus musculus (Mouse)).